A 504-amino-acid polypeptide reads, in one-letter code: Glutamate--tRNA ligase (504 aa).

Residues 9–19 (PSPTGDPHVGT) carry the 'HIGH' region motif. Positions 248-252 (KISKR) match the 'KMSKS' region motif. Lysine 251 is an ATP binding site.

This sequence belongs to the class-I aminoacyl-tRNA synthetase family. Glutamate--tRNA ligase type 1 subfamily. Monomer.

The protein resides in the cytoplasm. The enzyme catalyses tRNA(Glu) + L-glutamate + ATP = L-glutamyl-tRNA(Glu) + AMP + diphosphate. Its function is as follows. Catalyzes the attachment of glutamate to tRNA(Glu) in a two-step reaction: glutamate is first activated by ATP to form Glu-AMP and then transferred to the acceptor end of tRNA(Glu). This Acidothermus cellulolyticus (strain ATCC 43068 / DSM 8971 / 11B) protein is Glutamate--tRNA ligase.